A 50-amino-acid chain; its full sequence is Sperm protamine P1 (50 aa).

The protein belongs to the protamine P1 family. In terms of assembly, cross-linked by interchain disulfide bonds around the DNA-helix. In terms of tissue distribution, testis.

It localises to the nucleus. The protein localises to the chromosome. Protamines substitute for histones in the chromatin of sperm during the haploid phase of spermatogenesis. They compact sperm DNA into a highly condensed, stable and inactive complex. This chain is Sperm protamine P1 (PRM1), found in Saimiri sciureus (Common squirrel monkey).